The sequence spans 347 residues: Intracellular hyaluronan-binding protein 4 (347 aa).

Disordered regions lie at residues glycine 39–threonine 221 and phenylalanine 298–alanine 347. Basic and acidic residues-rich tracts occupy residues valine 61–threonine 71, proline 83–lysine 107, arginine 116–alanine 125, and aspartate 146–serine 174. Residues glutamate 199 to aspartate 213 show a composition bias toward acidic residues. Residues glycine 307–glycine 319 are compositionally biased toward gly residues. Over residues aspartate 338–alanine 347 the composition is skewed to acidic residues.

Belongs to the SERBP1-HABP4 family. As to quaternary structure, associates with ribosomes; promoting ribosome stabilization. Interacts with eef2/eEF2; promoting ribosome stabilization.

It is found in the nucleus. It localises to the cytoplasm. The protein resides in the stress granule. The protein localises to the nucleolus. Its subcellular location is the nucleus speckle. It is found in the cajal body. Its function is as follows. Ribosome-binding protein that promotes ribosome hibernation, a process during which ribosomes are stabilized in an inactive state and preserved from proteasomal degradation. Acts via its association with eef2/eEF2 factor at the A-site of the ribosome, promoting ribosome stabilization in an inactive state compatible with storage. Plays a key role in ribosome hibernation in the mature egg by promoting ribosome stabilization. Ribosomes, which are produced in large quantities during oogenesis, are stored and translationally repressed in the egg and early embryo. The sequence is that of Intracellular hyaluronan-binding protein 4 from Danio rerio (Zebrafish).